A 178-amino-acid polypeptide reads, in one-letter code: Probable chorismate pyruvate-lyase (178 aa).

3 residues coordinate substrate: R73, L111, and E163.

The protein belongs to the UbiC family.

The protein localises to the cytoplasm. The catalysed reaction is chorismate = 4-hydroxybenzoate + pyruvate. The protein operates within cofactor biosynthesis; ubiquinone biosynthesis. Functionally, removes the pyruvyl group from chorismate, with concomitant aromatization of the ring, to provide 4-hydroxybenzoate (4HB) for the ubiquinone pathway. The protein is Probable chorismate pyruvate-lyase of Pseudomonas aeruginosa (strain ATCC 15692 / DSM 22644 / CIP 104116 / JCM 14847 / LMG 12228 / 1C / PRS 101 / PAO1).